A 336-amino-acid polypeptide reads, in one-letter code: UPF0104 membrane protein MJ1595 (336 aa).

9 helical membrane-spanning segments follow: residues Ser9 to Leu29, Asn40 to Ala60, Ile68 to Ile88, Val127 to Thr147, Tyr154 to Ala174, Trp223 to Leu243, Leu245 to Ile265, Val285 to Leu305, and Leu306 to Ile326.

Belongs to the UPF0104 family.

Its subcellular location is the cell membrane. This chain is UPF0104 membrane protein MJ1595, found in Methanocaldococcus jannaschii (strain ATCC 43067 / DSM 2661 / JAL-1 / JCM 10045 / NBRC 100440) (Methanococcus jannaschii).